Reading from the N-terminus, the 250-residue chain is 3-deoxy-manno-octulosonate cytidylyltransferase (250 aa).

The protein belongs to the KdsB family.

Its subcellular location is the cytoplasm. The catalysed reaction is 3-deoxy-alpha-D-manno-oct-2-ulosonate + CTP = CMP-3-deoxy-beta-D-manno-octulosonate + diphosphate. It participates in nucleotide-sugar biosynthesis; CMP-3-deoxy-D-manno-octulosonate biosynthesis; CMP-3-deoxy-D-manno-octulosonate from 3-deoxy-D-manno-octulosonate and CTP: step 1/1. It functions in the pathway bacterial outer membrane biogenesis; lipopolysaccharide biosynthesis. Functionally, activates KDO (a required 8-carbon sugar) for incorporation into bacterial lipopolysaccharide in Gram-negative bacteria. The protein is 3-deoxy-manno-octulosonate cytidylyltransferase of Syntrophobacter fumaroxidans (strain DSM 10017 / MPOB).